The following is a 159-amino-acid chain: Endoribonuclease YbeY (159 aa).

Residues histidine 125, histidine 129, and histidine 135 each contribute to the Zn(2+) site.

Belongs to the endoribonuclease YbeY family. Requires Zn(2+) as cofactor.

It is found in the cytoplasm. Functionally, single strand-specific metallo-endoribonuclease involved in late-stage 70S ribosome quality control and in maturation of the 3' terminus of the 16S rRNA. The protein is Endoribonuclease YbeY of Enterococcus faecalis (strain ATCC 700802 / V583).